We begin with the raw amino-acid sequence, 967 residues long: Leucine-rich repeat receptor-like protein kinase PXC2 (967 aa).

The N-terminal stretch at 1–20 (MFNGAVSLLFLFLAVVSARA) is a signal peptide. Over 21–609 (DPTFNDDVLG…QIRKSVLSIS (589 aa)) the chain is Extracellular. LRR repeat units follow at residues 91-114 (LQFLHTLVLSNNNLTGTLNPEFPH), 115-139 (LGSLQVVDFSGNNLSGRIPDGFFEQ), 141-164 (GSLRSVSLANNKLTGSIPVSLSYC), 165-189 (STLTHLNLSSNQLSGRLPRDIWFLK), 191-212 (LKSLDFSHNFLQGDIPDGLGGL), 214-236 (DLRHINLSRNWFSGDVPSDIGRC), 237-260 (SSLKSLDLSENYFSGNLPDSMKSL), 262-284 (SCSSIRLRGNSLIGEIPDWIGDI), 285-307 (ATLEILDLSANNFTGTVPFSLGN), 308-332 (LEFLKDLNLSANMLAGELPQTLSNC), and 334-356 (NLISIDVSKNSFTGDVLKWMFTG). N-linked (GlcNAc...) asparagine glycosylation is found at N103 and N127. A glycan (N-linked (GlcNAc...) asparagine) is linked at N171. N219 carries an N-linked (GlcNAc...) asparagine glycan. 3 N-linked (GlcNAc...) asparagine glycosylation sites follow: N296, N315, and N331. Residue N374 is glycosylated (N-linked (GlcNAc...) asparagine). LRR repeat units lie at residues 384-408 (LQGLRVLDLSSNGFTGELPSNIWIL), 410-432 (SLLQLNMSTNSLFGSIPTGIGGL), 433-456 (KVAEILDLSSNLLNGTLPSEIGGA), 457-480 (VSLKQLHLHRNRLSGQIPAKISNC), 482-503 (ALNTINLSENELSGAIPGSIGS), 504-528 (LSNLEYIDLSRNNLSGSLPKEIEKL), and 530-552 (HLLTFNISHNNITGELPAGGFFN). N415, N446, N479, N487, N516, N535, N540, N571, and N587 each carry an N-linked (GlcNAc...) asparagine glycan. A helical transmembrane segment spans residues 610-630 (ALIAIGAAAVIAIGVVAVTLL). Residues 631-967 (NVHARSSVSR…LIQCPSHDLE (337 aa)) lie on the Cytoplasmic side of the membrane. The 273-residue stretch at 687 to 959 (LNKDSELGRG…EEVVKILELI (273 aa)) folds into the Protein kinase domain. ATP is bound by residues 693–701 (LGRGGFGVV) and K715.

Belongs to the protein kinase superfamily. Ser/Thr protein kinase family. As to expression, expressed in the vascular strands of cotyledons, the shoot apex, hypocotyls, roots, leaves, stems and flowers.

The protein resides in the cell membrane. In terms of biological role, leucine-rich repeat receptor-like protein kinase that may play a role in vascular tissues development. This is Leucine-rich repeat receptor-like protein kinase PXC2 from Arabidopsis thaliana (Mouse-ear cress).